Consider the following 93-residue polypeptide: LQLARISGVKALSIQALAQALRPQLQVGDTLKLLILKEGKEPHQGVGYLEDGSMVVVDGGSRYRGQEIEVVVTQAIQTQVGRLFFARPAQGAQ.

The TRAM domain occupies 24–85 (QLQVGDTLKL…IQTQVGRLFF (62 aa)).

Belongs to the ycf81 family.

This is an uncharacterized protein from Thermus thermophilus.